Consider the following 87-residue polypeptide: Small ribosomal subunit protein bS20 (87 aa).

Basic residues predominate over residues 1–11 (MANHKSALKRI). The interval 1–23 (MANHKSALKRIKQTEKRTERNRH) is disordered.

The protein belongs to the bacterial ribosomal protein bS20 family.

In terms of biological role, binds directly to 16S ribosomal RNA. The sequence is that of Small ribosomal subunit protein bS20 from Geotalea uraniireducens (strain Rf4) (Geobacter uraniireducens).